Reading from the N-terminus, the 482-residue chain is Retinoic acid receptor beta (482 aa).

The segment at 1–114 (MSTSSHACPV…PLPPPRVYKP (114 aa)) is modulating. Ser-104 is modified (phosphoserine). 2 consecutive NR C4-type zinc fingers follow at residues 115–135 (CFVCQDKSSGYHYGVSACEGC) and 151–175 (CHRDKNCVINKVTRNRCQYCRLQKC). Positions 115–180 (CFVCQDKSSG…RLQKCFEVGM (66 aa)) form a DNA-binding region, nuclear receptor. Positions 181–209 (SKESVRNDRNKKKKEPSKQECTESYEMTA) are hinge. One can recognise an NR LBD domain in the interval 210–444 (ELDDLTEKIR…PLIQEMLENS (235 aa)). A disordered region spans residues 443–482 (NSEGHEPLTPSSSGNIAEHSPSVSPSSVENSGVSQSPLLQ). Low complexity predominate over residues 462 to 482 (SPSVSPSSVENSGVSQSPLLQ).

The protein belongs to the nuclear hormone receptor family. NR1 subfamily. In terms of assembly, homodimer. Heterodimer; with a RXR molecule. Binds DNA preferentially as a RAR/RXR heterodimer. Heterodimerizes (via NR LBD) with RXRA. Interacts weakly with NCOR2.

It is found in the nucleus. The protein localises to the cytoplasm. Functionally, receptor for retinoic acid. Retinoic acid receptors bind as heterodimers to their target response elements in response to their ligands, all-trans or 9-cis retinoic acid, and regulate gene expression in various biological processes. The RAR/RXR heterodimers bind to the retinoic acid response elements (RARE) composed of tandem 5'-AGGTCA-3' sites known as DR1-DR5. In the absence of ligand, acts mainly as an activator of gene expression due to weak binding to corepressors. The RXRA/RARB heterodimer can act as a repressor on the DR1 element and as an activator on the DR5 element. In concert with RARG, required for skeletal growth, matrix homeostasis and growth plate function. This is Retinoic acid receptor beta (Rarb) from Mus musculus (Mouse).